Consider the following 707-residue polypeptide: E3 ubiquitin-protein ligase Praja-2 (707 aa).

A compositionally biased stretch (basic and acidic residues) spans 1-10 (MSQYTEKEPS). Disordered regions lie at residues 1-23 (MSQYTEKEPSVMDQDSSKAAWPR), 75-120 (NTAG…PSVA), and 242-290 (AGDA…CVPG). Ser-2 bears the N-acetylserine mark. The span at 109–119 (LNQSTESNPSV) shows a compositional bias: polar residues. The span at 246–276 (EAVHQDGQEFQRSSEDGIVRKRRQDDTDQGR) shows a compositional bias: basic and acidic residues. A phosphoserine mark is found at Ser-306 and Ser-320. Residue Ser-339 is modified to Phosphoserine; by PKA. Disordered stretches follow at residues 380-403 (VTPREAERHRATAENGATASGRQE) and 424-493 (EDSS…QTSL). The segment covering 381 to 391 (TPREAERHRAT) has biased composition (basic and acidic residues). Ser-430 is subject to Phosphoserine. The segment covering 465–481 (NEPELQSDSSGPEEENQ) has biased composition (acidic residues). Positions 482-491 (ELSLQEGEQT) are enriched in polar residues. The interval 530–707 (DGNNNLEDDS…PANDNAEEAP (178 aa)) is interaction with PRKAR1A, PRKAR2A and PRKAR2B. The segment at 549-569 (WSLFDGFADGLGVAEAISYVD) is mediates interaction with TBC1D31. The RING-type; atypical zinc-finger motif lies at 633–674 (CPICCSEYIKDDIATELPCHHFFHKPCVSIWLQKSGTCPVCR). The tract at residues 686 to 707 (AAASSEPDLDASPANDNAEEAP) is disordered.

As to quaternary structure, binds ubiquitin-conjugating enzymes (E2s). In vitro, interacts with the ubiquitin-conjugating enzyme, UBE2D2. The phosphorylated form interacts with PRKAR1A, PRKAR2A and PRKAR2B. Binds the catalytic subunits of cAMP-dependent protein kinase. Interacts with MFHAS1. Interacts with TBC1D31; the interaction is direct and recruits PJA2 to centrosomes. As to expression, highly expressed in the brain, in nerve cells but not in glial cells. Abundantly expressed in pyramidal neurons and in the CA3 region of apical dendrites. Colocalizes with PRKAR2B in dentate granule cells and at postsynaptic sites of primary hippocampal neurons.

The protein localises to the cytoplasm. It localises to the cell membrane. It is found in the endoplasmic reticulum membrane. Its subcellular location is the golgi apparatus membrane. The protein resides in the synapse. The protein localises to the postsynaptic density. It localises to the cytoskeleton. It is found in the microtubule organizing center. Its subcellular location is the centrosome. It carries out the reaction S-ubiquitinyl-[E2 ubiquitin-conjugating enzyme]-L-cysteine + [acceptor protein]-L-lysine = [E2 ubiquitin-conjugating enzyme]-L-cysteine + N(6)-ubiquitinyl-[acceptor protein]-L-lysine.. The protein operates within protein modification; protein ubiquitination. Functionally, has E2-dependent E3 ubiquitin-protein ligase activity. Responsible for ubiquitination of cAMP-dependent protein kinase type I and type II-alpha/beta regulatory subunits and for targeting them for proteasomal degradation. Essential for PKA-mediated long-term memory processes. Through the ubiquitination of MFHAS1, positively regulates the TLR2 signaling pathway that leads to the activation of the downstream p38 and JNK MAP kinases and promotes the polarization of macrophages toward the pro-inflammatory M1 phenotype. Plays a role in ciliogenesis by ubiquitinating OFD1. The polypeptide is E3 ubiquitin-protein ligase Praja-2 (Pja2) (Rattus norvegicus (Rat)).